We begin with the raw amino-acid sequence, 105 residues long: Large ribosomal subunit protein bL21 (105 aa).

The protein belongs to the bacterial ribosomal protein bL21 family. Part of the 50S ribosomal subunit. Contacts protein L20.

This protein binds to 23S rRNA in the presence of protein L20. The chain is Large ribosomal subunit protein bL21 from Parafrankia sp. (strain EAN1pec).